Reading from the N-terminus, the 333-residue chain is Autoinducer 2 import system permease protein LsrD (333 aa).

10 helical membrane-spanning segments follow: residues 7–27, 45–65, 67–87, 90–110, 118–138, 162–182, 212–232, 240–260, 261–281, and 288–308; these read YGWELTLAALLVLEILLFGLS, ICIGIVALPLTMVIVSGGIDI, FGSTIGLCAIFLGIVFQAGVP, VAIPLTVLIGALCGLINAGLI, LVITLGTLYLFGGSALLLSGL, LFGLPIPLVIFMLCVLLFWLL, TLCMLYAMTGVASAIAAILLV, SDLGASFLMPAITAVVLGGAN, IYGGSGSILGTALAVLLVGYL, and IGTPNQISSALSGALLILVVV.

The protein belongs to the binding-protein-dependent transport system permease family. AraH/RbsC subfamily. The complex is composed of two ATP-binding proteins (LsrA), two transmembrane proteins (LsrC and LsrD) and a solute-binding protein (LsrB).

Its subcellular location is the cell inner membrane. In terms of biological role, part of the ABC transporter complex LsrABCD involved in autoinducer 2 (AI-2) import. Probably responsible for the translocation of the substrate across the membrane. This is Autoinducer 2 import system permease protein LsrD (lsrD) from Yersinia pseudotuberculosis serotype O:1b (strain IP 31758).